Reading from the N-terminus, the 510-residue chain is 2,3-bisphosphoglycerate-independent phosphoglycerate mutase (510 aa).

Mn(2+) contacts are provided by D12 and S62. S62 acts as the Phosphoserine intermediate in catalysis. Substrate contacts are provided by residues H123, 153–154 (RD), R185, R191, 260–263 (RPDR), and K335. D402, H406, D443, H444, and H461 together coordinate Mn(2+).

It belongs to the BPG-independent phosphoglycerate mutase family. In terms of assembly, monomer. Mn(2+) serves as cofactor.

The enzyme catalyses (2R)-2-phosphoglycerate = (2R)-3-phosphoglycerate. It participates in carbohydrate degradation; glycolysis; pyruvate from D-glyceraldehyde 3-phosphate: step 3/5. Its function is as follows. Catalyzes the interconversion of 2-phosphoglycerate and 3-phosphoglycerate. This Listeria monocytogenes serotype 4b (strain F2365) protein is 2,3-bisphosphoglycerate-independent phosphoglycerate mutase.